A 955-amino-acid polypeptide reads, in one-letter code: Mediator of RNA polymerase II transcription subunit 16 (955 aa).

The tract at residues 855-874 (ALPETNANANANQNGKSSTQ) is disordered. Residues 857–873 (PETNANANANQNGKSST) show a composition bias toward polar residues.

It belongs to the Mediator complex subunit 16 family. In terms of assembly, component of the Mediator complex.

It localises to the nucleus. In terms of biological role, component of the Mediator complex, a coactivator involved in the regulated transcription of nearly all RNA polymerase II-dependent genes. Mediator functions as a bridge to convey information from gene-specific regulatory proteins to the basal RNA polymerase II transcription machinery. Mediator is recruited to promoters by direct interactions with regulatory proteins and serves as a scaffold for the assembly of a functional preinitiation complex with RNA polymerase II and the general transcription factors. The protein is Mediator of RNA polymerase II transcription subunit 16 (sin4) of Aspergillus fumigatus (strain ATCC MYA-4609 / CBS 101355 / FGSC A1100 / Af293) (Neosartorya fumigata).